Reading from the N-terminus, the 179-residue chain is Large ribosomal subunit protein uL6 (179 aa).

This sequence belongs to the universal ribosomal protein uL6 family. As to quaternary structure, part of the 50S ribosomal subunit.

This protein binds to the 23S rRNA, and is important in its secondary structure. It is located near the subunit interface in the base of the L7/L12 stalk, and near the tRNA binding site of the peptidyltransferase center. In Rippkaea orientalis (strain PCC 8801 / RF-1) (Cyanothece sp. (strain PCC 8801)), this protein is Large ribosomal subunit protein uL6.